The sequence spans 355 residues: Neutral protease 2 homolog AFUB_100460 (355 aa).

The N-terminal stretch at 1 to 19 is a signal peptide; sequence MKITALASAILAVAQGALA. Residues 20–172 constitute a propeptide that is removed on maturation; the sequence is LPARAPALDI…PASIKPLDRR (153 aa). 2 disulfide bridges follow: Cys-179–Cys-251 and Cys-258–Cys-276. His-300 lines the Zn(2+) pocket. The active site involves Glu-301. Residues His-304 and Asp-315 each coordinate Zn(2+).

Belongs to the peptidase M35 family. The cofactor is Zn(2+).

It localises to the secreted. The catalysed reaction is Preferential cleavage of bonds with hydrophobic residues in P1'. Also 3-Asn-|-Gln-4 and 8-Gly-|-Ser-9 bonds in insulin B chain.. In terms of biological role, secreted metalloproteinase that allows assimilation of proteinaceous substrates. Shows high activities on basic nuclear substrates such as histone and protamine. May be involved in virulence. The protein is Neutral protease 2 homolog AFUB_100460 of Aspergillus fumigatus (strain CBS 144.89 / FGSC A1163 / CEA10) (Neosartorya fumigata).